The following is a 273-amino-acid chain: Aspartate/glutamate leucyltransferase (273 aa).

It belongs to the R-transferase family. Bpt subfamily.

It is found in the cytoplasm. The catalysed reaction is N-terminal L-glutamyl-[protein] + L-leucyl-tRNA(Leu) = N-terminal L-leucyl-L-glutamyl-[protein] + tRNA(Leu) + H(+). It carries out the reaction N-terminal L-aspartyl-[protein] + L-leucyl-tRNA(Leu) = N-terminal L-leucyl-L-aspartyl-[protein] + tRNA(Leu) + H(+). In terms of biological role, functions in the N-end rule pathway of protein degradation where it conjugates Leu from its aminoacyl-tRNA to the N-termini of proteins containing an N-terminal aspartate or glutamate. The polypeptide is Aspartate/glutamate leucyltransferase (Ruegeria pomeroyi (strain ATCC 700808 / DSM 15171 / DSS-3) (Silicibacter pomeroyi)).